The chain runs to 829 residues: uncharacterized protein (829 aa).

The protein belongs to the IIV-6 050L family.

This is an uncharacterized protein from Invertebrate iridescent virus 3 (IIV-3).